We begin with the raw amino-acid sequence, 138 residues long: Thyrotropin subunit beta (138 aa).

A signal peptide spans 1–20; the sequence is MTALFLMSMLFGLTCGQAMS. 6 cysteine pairs are disulfide-bonded: cysteine 22-cysteine 72, cysteine 36-cysteine 87, cysteine 39-cysteine 125, cysteine 47-cysteine 103, cysteine 51-cysteine 105, and cysteine 108-cysteine 115. N-linked (GlcNAc...) asparagine glycosylation is present at asparagine 43. Residues 133–138 constitute a propeptide that is removed on maturation; the sequence is LVGFSV.

It belongs to the glycoprotein hormones subunit beta family. As to quaternary structure, heterodimer of a common alpha chain and a unique beta chain which confers biological specificity to thyrotropin, lutropin, follitropin and gonadotropin.

The protein localises to the secreted. Indispensable for the control of thyroid structure and metabolism. The chain is Thyrotropin subunit beta (TSHB) from Homo sapiens (Human).